Here is a 93-residue protein sequence, read N- to C-terminus: Translation initiation factor IF-1 (93 aa).

Residues 1–72 enclose the S1-like domain; that stretch reads MAKEELIQFE…EKGRLIFRHK (72 aa). The tract at residues 69 to 93 is disordered; it reads FRHKDERPSGAPRGGPPRGGQFRRR.

Belongs to the IF-1 family. As to quaternary structure, component of the 30S ribosomal translation pre-initiation complex which assembles on the 30S ribosome in the order IF-2 and IF-3, IF-1 and N-formylmethionyl-tRNA(fMet); mRNA recruitment can occur at any time during PIC assembly.

Its subcellular location is the cytoplasm. Its function is as follows. One of the essential components for the initiation of protein synthesis. Stabilizes the binding of IF-2 and IF-3 on the 30S subunit to which N-formylmethionyl-tRNA(fMet) subsequently binds. Helps modulate mRNA selection, yielding the 30S pre-initiation complex (PIC). Upon addition of the 50S ribosomal subunit IF-1, IF-2 and IF-3 are released leaving the mature 70S translation initiation complex. This Nitrobacter hamburgensis (strain DSM 10229 / NCIMB 13809 / X14) protein is Translation initiation factor IF-1.